We begin with the raw amino-acid sequence, 368 residues long: Phospho-N-acetylmuramoyl-pentapeptide-transferase (368 aa).

10 consecutive transmembrane segments (helical) span residues 2 to 22, 51 to 71, 80 to 100, 116 to 136, 166 to 186, 193 to 213, 234 to 254, 256 to 276, 277 to 297, and 340 to 360; these read IALI…TPLL, TLGG…SALY, PTWA…LGFI, VGGK…LALI, IVAI…WTNA, LDGL…IIAM, PLDL…FLWY, CNPA…GLFA, ALSI…LFVV, and FWIV…GNWV.

It belongs to the glycosyltransferase 4 family. MraY subfamily. Mg(2+) is required as a cofactor.

The protein resides in the cell membrane. It catalyses the reaction UDP-N-acetyl-alpha-D-muramoyl-L-alanyl-gamma-D-glutamyl-meso-2,6-diaminopimeloyl-D-alanyl-D-alanine + di-trans,octa-cis-undecaprenyl phosphate = di-trans,octa-cis-undecaprenyl diphospho-N-acetyl-alpha-D-muramoyl-L-alanyl-D-glutamyl-meso-2,6-diaminopimeloyl-D-alanyl-D-alanine + UMP. Its pathway is cell wall biogenesis; peptidoglycan biosynthesis. Catalyzes the initial step of the lipid cycle reactions in the biosynthesis of the cell wall peptidoglycan: transfers peptidoglycan precursor phospho-MurNAc-pentapeptide from UDP-MurNAc-pentapeptide onto the lipid carrier undecaprenyl phosphate, yielding undecaprenyl-pyrophosphoryl-MurNAc-pentapeptide, known as lipid I. The sequence is that of Phospho-N-acetylmuramoyl-pentapeptide-transferase from Bifidobacterium animalis subsp. lactis (strain AD011).